The chain runs to 571 residues: Phosphoribosylaminoimidazole carboxylase (571 aa).

The residue at position 37 (Ser-37) is a Phosphoserine. Residues 110–298 (KEHLIKNGIA…QFEAHLRSIL (189 aa)) form the ATP-grasp domain. ATP is bound at residue 138–193 (GRDLGFPFVLKSRTLAYDGRGNFVVKNKEMIPEALEVLKDRPLYAEKWAPFTKELA).

It in the C-terminal section; belongs to the AIR carboxylase family. Class I subfamily.

The enzyme catalyses 5-amino-1-(5-phospho-D-ribosyl)imidazole-4-carboxylate + H(+) = 5-amino-1-(5-phospho-beta-D-ribosyl)imidazole + CO2. It participates in purine metabolism; IMP biosynthesis via de novo pathway; 5-amino-1-(5-phospho-D-ribosyl)imidazole-4-carboxylate from 5-amino-1-(5-phospho-D-ribosyl)imidazole (carboxylase route): step 1/1. In Saccharomyces cerevisiae (strain ATCC 204508 / S288c) (Baker's yeast), this protein is Phosphoribosylaminoimidazole carboxylase (ADE2).